The chain runs to 291 residues: ATP synthase subunit a (291 aa).

The next 5 membrane-spanning stretches (helical) occupy residues Phe-47–Val-67, His-140–Phe-160, Phe-167–Leu-187, Met-207–Leu-227, and Ile-230–Glu-250.

This sequence belongs to the ATPase A chain family. In terms of assembly, F-type ATPases have 2 components, CF(1) - the catalytic core - and CF(0) - the membrane proton channel. CF(1) has five subunits: alpha(3), beta(3), gamma(1), delta(1), epsilon(1). CF(0) has three main subunits: a, b and c.

The protein localises to the mitochondrion inner membrane. Mitochondrial membrane ATP synthase (F(1)F(0) ATP synthase or Complex V) produces ATP from ADP in the presence of a proton gradient across the membrane which is generated by electron transport complexes of the respiratory chain. F-type ATPases consist of two structural domains, F(1) - containing the extramembraneous catalytic core and F(0) - containing the membrane proton channel, linked together by a central stalk and a peripheral stalk. During catalysis, ATP synthesis in the catalytic domain of F(1) is coupled via a rotary mechanism of the central stalk subunits to proton translocation. Key component of the proton channel; it may play a direct role in the translocation of protons across the membrane. This chain is ATP synthase subunit a (ATP6), found in Zea mays (Maize).